A 1273-amino-acid chain; its full sequence is Lysine-specific histone demethylase 2 (1273 aa).

Positions 199–230 are enriched in polar residues; it reads ENFFDANSPSSQQFPSTYPSRSQNPLSSSGDG. A disordered region spans residues 199 to 237; that stretch reads ENFFDANSPSSQQFPSTYPSRSQNPLSSSGDGSTAIHAG. The stretch at 247–307 forms a coiled coil; sequence FSNYPYPLDA…LSKSVDNAVL (61 aa). In terms of domain architecture, SWIRM spans 394-490; it reads AAEAARKCNL…YGCLSFDSSF (97 aa). Residues 509–551, Thr-517, Glu-550, Arg-558, and 572–573 each bind FAD; these read IAVV…ILEA and TQ. The demethylase activity stretch occupies residues 542–1198; the sequence is LPPKVIILEA…GKILRYQRLT (657 aa). The disordered stretch occupies residues 571–596; it reads ATQINHHTSNSNSISSNSTSLNPKDV. Positions 574–590 are enriched in low complexity; it reads INHHTSNSNSISSNSTS. Residues 681–767 are a coiled coil; sequence SVRISWISQF…NTVDTDFSKD (87 aa). The segment at residues 1115 to 1195 is a DNA-binding region (HMG box); sequence SKPNANPFLL…AYAGKILRYQ (81 aa). FAD-binding positions include Asp-1147 and 1156 to 1157; that span reads ET. Residues 1215 to 1273 form a disordered region; it reads KCQDEPIPDDEARLFMQAQREEEQRKQTQDDNISKSREASDEEYHDDGSSDSGYNGTRY. Residues 1233–1253 show a composition bias toward basic and acidic residues; the sequence is QREEEQRKQTQDDNISKSREA. Residues 1264-1273 show a composition bias toward polar residues; that stretch reads SDSGYNGTRY.

The protein belongs to the flavin monoamine oxidase family. Component of the SWM histone demethylase complex composed of at least lsd1, lsd2, phf1 and phf2. Interacts directly with lsd1. FAD serves as cofactor.

The protein localises to the nucleus. Its function is as follows. Catalytic component of the SWM histone demethylase complex that specifically demethylates H3K9me2, a specific tag for epigenetic transcriptional activation, thereby acting as a corepressor. Acts by oxidizing the substrate by FAD to generate the corresponding imine that is subsequently hydrolyzed. Has a role in regulating heterochromatin propagation and euchromatic transcription. Also has a gene activating role. The sequence is that of Lysine-specific histone demethylase 2 (lsd2) from Schizosaccharomyces pombe (strain 972 / ATCC 24843) (Fission yeast).